Consider the following 306-residue polypeptide: Olfactory receptor 8G17 (306 aa).

The Extracellular segment spans residues 1–28 (MEKGNQSTVNKFFLSGLTEQPELQLPLF). Asn-5 carries an N-linked (GlcNAc...) asparagine glycan. The chain crosses the membrane as a helical span at residues 29–49 (LLFLGIYLLTVLGNLGMIILI). Residues 50–56 (LLSSYLH) lie on the Cytoplasmic side of the membrane. The helical transmembrane segment at 57–77 (TPMYFFLSSLSFIDFCQSTVI) threads the bilayer. Residues 78–97 (TPKMLVKFVREKNEISYPEC) are Extracellular-facing. Residues 98 to 118 (ITQLCFFVIFAVSESYMLAAM) form a helical membrane-spanning segment. Residues 119–143 (AYDRYVAICSPLLYSSIMSQHKCLS) lie on the Cytoplasmic side of the membrane. The chain crosses the membrane as a helical span at residues 144-164 (LVLGVYILGIVCASAHVGCIF). Over 165–196 (RIDFCKSDLINHYFCDLISILNLSCSNIFVND) the chain is Extracellular. Residues 197–217 (LVILIFSLINTIFPTLTILSS) traverse the membrane as a helical segment. Residues 218–236 (YAFIIISILRIKSTEGRSK) lie on the Cytoplasmic side of the membrane. The chain crosses the membrane as a helical span at residues 237–257 (AFSTCSSHISAVAIFYISAGF). Residues 258–271 (TYLNPSSSHSMDEG) are Extracellular-facing. The helical transmembrane segment at 272–292 (KVSSIFYTIIVPMLNPLIYSL) threads the bilayer. Over 293-306 (RNKDVKIALKKMIE) the chain is Cytoplasmic.

The protein belongs to the G-protein coupled receptor 1 family.

It is found in the cell membrane. Its function is as follows. Odorant receptor. In Mus musculus (Mouse), this protein is Olfactory receptor 8G17.